We begin with the raw amino-acid sequence, 178 residues long: PRA1 family protein 2 (178 aa).

The Cytoplasmic portion of the chain corresponds to 1–41; it reads MSEVRLPPLRALDDFVLGSARLAAPDPCDPQRWCHRVINNL. A helical membrane pass occupies residues 42–62; sequence LYYQTNYLLCFGIGLALAGYV. Residues 63–64 are Extracellular-facing; sequence RP. A helical transmembrane segment spans residues 65-85; sequence LHTLLSALVVAVALGVLVWAA. The Cytoplasmic segment spans residues 86–96; it reads ETRAAVRRCRR. The helical transmembrane segment at 97-119 threads the bilayer; sequence SHPAACLAAVLAVGLLVLWVAGG. Over 120–122 the chain is Extracellular; sequence ACT. Residues 123–140 traverse the membrane as a helical segment; that stretch reads FLFSIAGPVLLILVHASL. The Cytoplasmic portion of the chain corresponds to 141–178; sequence RLRNLKNKIENKIESIGLKRTPMGLLLEALGQEQEAGS.

The protein belongs to the PRA1 family. Interacts with CCR5 and GDE1. Strong expression in the brain, small intestine, lung, spleen, and pancreas as well as in tumor tissues of the breast, colon, lung and ovary, with a weaker expression in normal tissues of the same patient. High expression in neuroblastic tumors. Strongly expressed in Purkinje cells and more moderately in cells of the molecular and the granular layers in the cerebellum. Detected in neuronal cells, but not in non-neuronal cells in the cerebral cortex, hippocampus, and lateral ventricles.

The protein resides in the endosome membrane. Its function is as follows. May be involved in ER/Golgi transport and vesicular traffic. Plays a proapoptotic role in cerulenin-induced neuroblastoma apoptosis. In Homo sapiens (Human), this protein is PRA1 family protein 2 (PRAF2).